The primary structure comprises 334 residues: Chemotactic signal transduction system substrate-binding protein CosB (334 aa).

A signal peptide spans 1-29 (MMDTPEHASTSSRRQLLGMLAAGGTTAVA).

It belongs to the OsmX family.

It is found in the cell membrane. In terms of biological role, mediates chemotaxis towards compatible osmolytes. May function as a receptor that binds the osmolytes and transduces a signal to CosT. Has probably no additional role in transport. This chain is Chemotactic signal transduction system substrate-binding protein CosB (cosB), found in Halobacterium salinarum (strain ATCC 29341 / DSM 671 / R1).